The primary structure comprises 469 residues: Keratin, type II cytoskeletal 7 (469 aa).

Serine 2 is subject to N-acetylserine. A phosphoserine mark is found at serine 2, serine 6, and serine 7. Residues 2-90 form a head region; sequence SIHFSSPVFT…DPSLQRVRQE (89 aa). Serine 12 carries an O-linked (GlcNAc) serine glycan. Dimethylated arginine; alternate is present on arginine 20. Arginine 20 carries the omega-N-methylarginine; alternate modification. Residues serine 53, serine 71, and serine 83 each carry the phosphoserine modification. Residues 90-126 form a coil 1A region; it reads EEREQIKTLNNKFASFIDKVRFLEQQNKLLETKWTLL. One can recognise an IF rod domain in the interval 91 to 403; that stretch reads EREQIKTLNN…KLLEGEESRL (313 aa). Residue threonine 97 is modified to Phosphothreonine. Positions 127–144 are linker 1; sequence QEQKSAKSSRLPDIFEAQ. Residue lysine 130 forms a Glycyl lysine isopeptide (Lys-Gly) (interchain with G-Cter in SUMO2) linkage. Positions 145-236 are coil 1B; sequence IAGLRGQLEA…TLNETELTEL (92 aa). Lysine 179 is modified (N6-acetyllysine). Residues 237-260 are linker 12; sequence QSQISDTSVVLSMDNSRSLDLDGI. Phosphoserine is present on residues serine 252 and serine 254. The interval 261–399 is coil 2; that stretch reads IAEVKAQYEE…ATYRKLLEGE (139 aa). Residues lysine 265 and lysine 286 each participate in a glycyl lysine isopeptide (Lys-Gly) (interchain with G-Cter in SUMO2) cross-link. Threonine 289 carries the phosphothreonine modification. Glycyl lysine isopeptide (Lys-Gly) (interchain with G-Cter in SUMO2) cross-links involve residues lysine 296 and lysine 331. Positions 400 to 469 are tail; it reads ESRLAGDGVG…ASASRRSARN (70 aa).

It belongs to the intermediate filament family. In terms of assembly, heterotetramer of two type I and two type II keratins. Interacts with eukaryotic translation initiator factor 3 (eIF3) subunit EIF3S10. Interacts with GPER1. Post-translationally, arg-20 is dimethylated, probably to asymmetric dimethylarginine.

Blocks interferon-dependent interphase and stimulates DNA synthesis in cells. In Pan troglodytes (Chimpanzee), this protein is Keratin, type II cytoskeletal 7.